The sequence spans 289 residues: Probable ABC transporter permease protein BruAb2_0483 (289 aa).

The next 6 helical transmembrane spans lie at 9 to 29 (FLIL…VVHL), 70 to 90 (VWTV…AIIL), 99 to 119 (VARV…AIFW), 144 to 166 (IQWL…LVTV), 213 to 233 (IAIV…WVMT), and 258 to 278 (FGEA…FTVI). An ABC transmembrane type-1 domain is found at 65-279 (LWRTAVWTVA…AILLVFTVIY (215 aa)).

The protein belongs to the binding-protein-dependent transport system permease family. The complex is composed of two ATP-binding proteins (BruAb2_0487), two transmembrane proteins (BruAb2_0483) and a solute-binding protein (BruAb2_0484).

The protein resides in the cell inner membrane. Functionally, probably part of an ABC transporter complex. Probably responsible for the translocation of the substrate across the membrane. This Brucella abortus biovar 1 (strain 9-941) protein is Probable ABC transporter permease protein BruAb2_0483.